Reading from the N-terminus, the 1127-residue chain is Carbamoyl phosphate synthase large chain (1127 aa).

The carboxyphosphate synthetic domain stretch occupies residues 1 to 402 (MPKRTDIKSV…SLGKAMRSID (402 aa)). Residues R129, R169, G175, G176, E208, I210, E215, G241, V242, H243, Q285, and E299 each coordinate ATP. Residues 133–328 (KKVVDEAGAE…IAKIATKLAL (196 aa)) form the ATP-grasp 1 domain. Residues Q285, E299, and N301 each contribute to the Mg(2+) site. Residues Q285, E299, and N301 each contribute to the Mn(2+) site. An oligomerization domain region spans residues 403-551 (KRHMGFNWDG…YYYSCYADET (149 aa)). Residues 552–962 (ELRPREREAV…AFAKSQLAAY (411 aa)) are carbamoyl phosphate synthetic domain. In terms of domain architecture, ATP-grasp 2 spans 681 to 881 (GEVLKKAEMN…LAKAAARIMA (201 aa)). R717, K765, L767, E772, G797, V798, H799, S800, Q840, and E852 together coordinate ATP. Positions 840, 852, and 854 each coordinate Mg(2+). Mn(2+)-binding residues include Q840, E852, and N854. The segment at 963-1127 (DGGLPTHGNV…QLFELERREF (165 aa)) is allosteric domain. One can recognise an MGS-like domain in the interval 964 to 1127 (GGLPTHGNVF…QLFELERREF (164 aa)).

The protein belongs to the CarB family. In terms of assembly, composed of two chains; the small (or glutamine) chain promotes the hydrolysis of glutamine to ammonia, which is used by the large (or ammonia) chain to synthesize carbamoyl phosphate. Tetramer of heterodimers (alpha,beta)4. The cofactor is Mg(2+). Requires Mn(2+) as cofactor.

The enzyme catalyses hydrogencarbonate + L-glutamine + 2 ATP + H2O = carbamoyl phosphate + L-glutamate + 2 ADP + phosphate + 2 H(+). It carries out the reaction hydrogencarbonate + NH4(+) + 2 ATP = carbamoyl phosphate + 2 ADP + phosphate + 2 H(+). The protein operates within amino-acid biosynthesis; L-arginine biosynthesis; carbamoyl phosphate from bicarbonate: step 1/1. It functions in the pathway pyrimidine metabolism; UMP biosynthesis via de novo pathway; (S)-dihydroorotate from bicarbonate: step 1/3. Functionally, large subunit of the glutamine-dependent carbamoyl phosphate synthetase (CPSase). CPSase catalyzes the formation of carbamoyl phosphate from the ammonia moiety of glutamine, carbonate, and phosphate donated by ATP, constituting the first step of 2 biosynthetic pathways, one leading to arginine and/or urea and the other to pyrimidine nucleotides. The large subunit (synthetase) binds the substrates ammonia (free or transferred from glutamine from the small subunit), hydrogencarbonate and ATP and carries out an ATP-coupled ligase reaction, activating hydrogencarbonate by forming carboxy phosphate which reacts with ammonia to form carbamoyl phosphate. In Bifidobacterium longum (strain DJO10A), this protein is Carbamoyl phosphate synthase large chain.